Here is a 374-residue protein sequence, read N- to C-terminus: Alginate lyase (374 aa).

An N-terminal signal peptide occupies residues 1–26 (MRNPKLKNLLAPTLLSLAMFAGATQA). Residues 67 to 68 (SK), 140 to 141 (HT), and Y258 contribute to the substrate site.

This sequence belongs to the polysaccharide lyase 5 family.

It is found in the periplasm. It carries out the reaction Eliminative cleavage of alginate to give oligosaccharides with 4-deoxy-alpha-L-erythro-hex-4-enuronosyl groups at their non-reducing ends and beta-D-mannuronate at their reducing end.. In terms of biological role, catalyzes the depolymerization of alginate by cleaving the beta-1,4 glycosidic bond between two adjacent sugar residues via a beta-elimination mechanism. May serve to degrade mislocalized alginate that is trapped in the periplasmic space. This is Alginate lyase from Cobetia marina (Deleya marina).